The following is a 166-amino-acid chain: Regulatory protein RecX (166 aa).

The protein belongs to the RecX family.

The protein resides in the cytoplasm. Functionally, modulates RecA activity. The polypeptide is Regulatory protein RecX (Salmonella arizonae (strain ATCC BAA-731 / CDC346-86 / RSK2980)).